A 250-amino-acid chain; its full sequence is Archaeal flagellar motor scaffold protein FlaX (250 aa).

Over 1-9 (MAIQDLLQS) the chain is Extracellular. A helical membrane pass occupies residues 10–30 (SLFIILIGVGIPIAAFLEILF). Over 31 to 250 (RVILPKTKRV…MILEGGGVNG (220 aa)) the chain is Cytoplasmic. Residues 42–61 (TQQSPQNISQEQRFPTQQKP) show a composition bias toward polar residues. Residues 42–72 (TQQSPQNISQEQRFPTQQKPANDETSKYSSD) are disordered. Residues 62–72 (ANDETSKYSSD) are compositionally biased toward basic and acidic residues.

In terms of assembly, the S.acidocaldarius archaellum assembly machinery and its filament consist of seven proteins (FlaB, FlaF, FlaG, FlaH, FlaI, FlaJ and FlaX). FlaX assembles into ring-shaped oligomers. Interacts directly with FlaH and the motor ATPase FlaI.

Its subcellular location is the archaeal flagellum. The protein resides in the cell membrane. Its activity is regulated as follows. The presence of the flagellar core components FlaH, FlaI and FlaJ seems to be crucial for the stability of FlaX. Its function is as follows. Component of the archaellum. FlaX, FlaH and FlaI form the core cytoplasmic motor complex of the crenarchaeal archaellum. FlaX forms a ring that may act as a membrane-bound cytoplasmic scaffold that guides the assembly of the archaellum motor complex. Is essential for archaellum assembly. This chain is Archaeal flagellar motor scaffold protein FlaX, found in Sulfolobus acidocaldarius (strain ATCC 33909 / DSM 639 / JCM 8929 / NBRC 15157 / NCIMB 11770).